The primary structure comprises 365 residues: Phosphate acyltransferase (365 aa).

Belongs to the PlsX family. As to quaternary structure, homodimer. Probably interacts with PlsY.

The protein resides in the cytoplasm. The catalysed reaction is a fatty acyl-[ACP] + phosphate = an acyl phosphate + holo-[ACP]. It participates in lipid metabolism; phospholipid metabolism. Catalyzes the reversible formation of acyl-phosphate (acyl-PO(4)) from acyl-[acyl-carrier-protein] (acyl-ACP). This enzyme utilizes acyl-ACP as fatty acyl donor, but not acyl-CoA. The chain is Phosphate acyltransferase from Jannaschia sp. (strain CCS1).